Here is a 275-residue protein sequence, read N- to C-terminus: MGFSSLLTTCRYLLYSGAGNSFILGESMPSLEDVLFLCQEEMVDGFLCVESSEIADAKLTVFNSDGSIASMCGNGLRCAMAHVAQCFGLEDVSIETERGVYQGKFFSMNRVLVDMTLPDWKKAERKLTHVLPGMPEQVFFIDTGVPHVVVFVSDLSKVPVQEWGSFLRYHEDFAPEGVNVDFVQRKKDDLLLVYTYERGCERETLSCGTGMLASALVAADIFSLGQDFSIAVCSRSRNLIKIFSEKGKVFLEGPVSLLNRSENFGWLEPKSRRFG.

2 residues coordinate substrate: Asn-20 and Asn-63. Residue Cys-72 is the Proton donor of the active site. Substrate contacts are provided by residues 73-74 (GN), Asn-179, and 197-198 (ER). The active-site Proton acceptor is the Cys-207. Residue 208–209 (GT) participates in substrate binding.

This sequence belongs to the diaminopimelate epimerase family. In terms of assembly, homodimer.

The protein localises to the cytoplasm. It carries out the reaction (2S,6S)-2,6-diaminopimelate = meso-2,6-diaminopimelate. It participates in amino-acid biosynthesis; L-lysine biosynthesis via DAP pathway; DL-2,6-diaminopimelate from LL-2,6-diaminopimelate: step 1/1. Catalyzes the stereoinversion of LL-2,6-diaminopimelate (L,L-DAP) to meso-diaminopimelate (meso-DAP), a precursor of L-lysine and an essential component of the bacterial peptidoglycan. The chain is Diaminopimelate epimerase from Chlamydia trachomatis serovar L2 (strain ATCC VR-902B / DSM 19102 / 434/Bu).